We begin with the raw amino-acid sequence, 75 residues long: Translation initiation factor IF-1 (75 aa).

An S1-like domain is found at 1–75 (MANLPKEQKL…SKGRIVYRFK (75 aa)).

This sequence belongs to the IF-1 family. Component of the 30S ribosomal translation pre-initiation complex which assembles on the 30S ribosome in the order IF-2 and IF-3, IF-1 and N-formylmethionyl-tRNA(fMet); mRNA recruitment can occur at any time during PIC assembly.

It is found in the cytoplasm. In terms of biological role, one of the essential components for the initiation of protein synthesis. Stabilizes the binding of IF-2 and IF-3 on the 30S subunit to which N-formylmethionyl-tRNA(fMet) subsequently binds. Helps modulate mRNA selection, yielding the 30S pre-initiation complex (PIC). Upon addition of the 50S ribosomal subunit IF-1, IF-2 and IF-3 are released leaving the mature 70S translation initiation complex. The polypeptide is Translation initiation factor IF-1 (Mesomycoplasma hyopneumoniae (strain 232) (Mycoplasma hyopneumoniae)).